The sequence spans 219 residues: Protein Ac132 (219 aa).

The disordered stretch occupies residues 1–34; it reads MSDKTPTKKGGSHAMTLRERGVTKPPKKSEKLQQ. Basic and acidic residues predominate over residues 16–33; it reads TLRERGVTKPPKKSEKLQ. The tract at residues 103–134 is NEBU-like domain; it reads YPMAYFVNTDYKLKLECARIRSDLLYKNKNEV.

As to quaternary structure, interacts with viral envelope protein E18 and the DNA-binding protein p6.9.

The protein resides in the host cytoplasm. The protein localises to the host nucleus. Its subcellular location is the virion. In terms of biological role, plays an essential role in nucleocapsid entry in host nucleus. May act by binding and stabilizing F-actin in the infected cell, which might attach to nucleocapsids and then push the nucleocapsids into the nucleus. The protein is Protein Ac132 (Ac132) of Autographa californica nuclear polyhedrosis virus (AcMNPV).